Consider the following 35-residue polypeptide: MSDIN-like toxin proprotein 6 (35 aa).

Positions 1-10 are excised as a propeptide; sequence MSDINTTRLP. Residues 11–18 constitute a cross-link (cyclopeptide (Phe-Pro)); the sequence is FVFVASPP. Positions 19–35 are excised as a propeptide; sequence CVGDDIAMVLTRGENLC.

It belongs to the MSDIN fungal toxin family. Post-translationally, processed by the macrocyclase-peptidase enzyme POPB to yield a toxic cyclic octapeptide. POPB first removes 10 residues from the N-terminus. Conformational trapping of the remaining peptide forces the enzyme to release this intermediate rather than proceed to macrocyclization. The enzyme rebinds the remaining peptide in a different conformation and catalyzes macrocyclization of the N-terminal 8 residues. In terms of tissue distribution, expressed in basidiocarps.

In terms of biological role, probable toxin that belongs to the MSDIN-like toxin family responsible for a large number of food poisoning cases and deaths. In Amanita exitialis (Guangzhou destroying angel), this protein is MSDIN-like toxin proprotein 6.